The chain runs to 533 residues: Putative replication factor C large subunit (533 aa).

Polar residues predominate over residues Met-1–Ile-11. The segment at Met-1–Lys-31 is disordered. Residues Val-17–Lys-31 are compositionally biased toward basic and acidic residues.

This sequence belongs to the activator 1 large subunit family.

In terms of biological role, part of the RFC clamp loader complex which loads the PCNA sliding clamp onto DNA. This chain is Putative replication factor C large subunit, found in Acanthamoeba polyphaga (Amoeba).